We begin with the raw amino-acid sequence, 450 residues long: Bifunctional protein GlmU (450 aa).

Residues Met1–Arg228 are pyrophosphorylase. Residues Leu8 to Gly11, Lys22, Gln75, and Gly80 to Thr81 each bind UDP-N-acetyl-alpha-D-glucosamine. Mg(2+) is bound at residue Asp105. UDP-N-acetyl-alpha-D-glucosamine-binding residues include Gly140, Glu154, Asn169, and Asn226. Asn226 contacts Mg(2+). Positions Thr229–Asn249 are linker. The interval Gly250–Ser450 is N-acetyltransferase. Positions 315 and 333 each coordinate UDP-N-acetyl-alpha-D-glucosamine. Catalysis depends on His345, which acts as the Proton acceptor. UDP-N-acetyl-alpha-D-glucosamine is bound by residues Tyr348 and Asn359. Acetyl-CoA-binding positions include Ala362, Asn368–Tyr369, Ser387, Ser405, and Arg422.

The protein in the N-terminal section; belongs to the N-acetylglucosamine-1-phosphate uridyltransferase family. It in the C-terminal section; belongs to the transferase hexapeptide repeat family. As to quaternary structure, homotrimer. Mg(2+) is required as a cofactor.

The protein localises to the cytoplasm. It carries out the reaction alpha-D-glucosamine 1-phosphate + acetyl-CoA = N-acetyl-alpha-D-glucosamine 1-phosphate + CoA + H(+). The enzyme catalyses N-acetyl-alpha-D-glucosamine 1-phosphate + UTP + H(+) = UDP-N-acetyl-alpha-D-glucosamine + diphosphate. Its pathway is nucleotide-sugar biosynthesis; UDP-N-acetyl-alpha-D-glucosamine biosynthesis; N-acetyl-alpha-D-glucosamine 1-phosphate from alpha-D-glucosamine 6-phosphate (route II): step 2/2. It participates in nucleotide-sugar biosynthesis; UDP-N-acetyl-alpha-D-glucosamine biosynthesis; UDP-N-acetyl-alpha-D-glucosamine from N-acetyl-alpha-D-glucosamine 1-phosphate: step 1/1. It functions in the pathway bacterial outer membrane biogenesis; LPS lipid A biosynthesis. In terms of biological role, catalyzes the last two sequential reactions in the de novo biosynthetic pathway for UDP-N-acetylglucosamine (UDP-GlcNAc). The C-terminal domain catalyzes the transfer of acetyl group from acetyl coenzyme A to glucosamine-1-phosphate (GlcN-1-P) to produce N-acetylglucosamine-1-phosphate (GlcNAc-1-P), which is converted into UDP-GlcNAc by the transfer of uridine 5-monophosphate (from uridine 5-triphosphate), a reaction catalyzed by the N-terminal domain. The chain is Bifunctional protein GlmU from Roseobacter denitrificans (strain ATCC 33942 / OCh 114) (Erythrobacter sp. (strain OCh 114)).